Consider the following 269-residue polypeptide: Phycobilisome 37.5 kDa linker polypeptide, phycocyanin-associated, rod (269 aa).

A PBS-linker domain is found at 2-177 (TSSTAARQLG…IYRGYANSDR (176 aa)). The region spanning 217-269 (GQLYRVRVIQADRGRTTQIRRSIQEYLVSYDQLSPTLQRLNQRGSRVVNISPA) is the CpcD-like domain.

Belongs to the phycobilisome linker protein family.

Its subcellular location is the cellular thylakoid membrane. Functionally, rod linker protein, associated with phycocyanin. Linker polypeptides determine the state of aggregation and the location of the disk-shaped phycobiliprotein units within the phycobilisome and modulate their spectroscopic properties in order to mediate a directed and optimal energy transfer. The chain is Phycobilisome 37.5 kDa linker polypeptide, phycocyanin-associated, rod (cpcH2) from Microchaete diplosiphon (Fremyella diplosiphon).